The chain runs to 94 residues: Scorpine-like-1 (94 aa).

A signal peptide spans 1–18 (MNTKFTVLIFLGVIVVSY). The region spanning 54-94 (EYGCMMDISWNKDCQRHCQSTEQKDGICHGMKCKCGKPRSY) is the BetaSPN-type CS-alpha/beta domain. 3 disulfides stabilise this stretch: Cys-57–Cys-81, Cys-67–Cys-86, and Cys-71–Cys-88.

This sequence belongs to the long chain scorpion toxin family. Class 3 subfamily. As to expression, expressed by the venom gland.

It localises to the secreted. Its function is as follows. Has antibacterial activity. The chain is Scorpine-like-1 from Urodacus yaschenkoi (Inland robust scorpion).